Reading from the N-terminus, the 264-residue chain is Protein ADMETOS (264 aa).

As to expression, paternally imprinted expression in the endosperm.

Product of a dosage-sensitive gene that contributes to the maintenance of paternally and maternally imprinted gene expression in the endosperm in order to balance parental contributions. Underlies postzygotic reproductive isolation by promoting triploid seed arrest in a genetic dosage-dependent manner, thus being a component of postzygotic interploidy hybridization barriers. The sequence is that of Protein ADMETOS from Arabidopsis thaliana (Mouse-ear cress).